A 683-amino-acid chain; its full sequence is Putative boron transporter 5 (683 aa).

Over 1 to 38 the chain is Cytoplasmic; the sequence is MEEERVEGSKRPFQGIIRDVKGRALCYKQDWIAGLRSG. Residues 39-59 form a helical membrane-spanning segment; sequence FGILAPTTYVFFASALPVIAF. Topologically, residues 60-80 are extracellular; sequence GEQLSHDTERSLSTVETLAST. The chain crosses the membrane as a helical span at residues 81–101; that stretch reads ALCGVIHSLLGGQPLLILGVA. The Cytoplasmic portion of the chain corresponds to 102 to 126; it reads EPTVLMYKYLYDFAKGRPELGKQLY. Residues 127–147 form a helical membrane-spanning segment; sequence LAWVAWVCVWTALLLFLMAIF. The Extracellular portion of the chain corresponds to 148-158; the sequence is NMAYIINRFTR. Residues 159-179 form a helical membrane-spanning segment; that stretch reads IAGELFGMLIAVLFLQQTIKG. The Cytoplasmic portion of the chain corresponds to 180-200; the sequence is MVSEFRIPKGEDSKLEKYQFE. A helical transmembrane segment spans residues 201–221; that stretch reads WLYTNGLLGLIFTVGLVYTAL. At 222–238 the chain is on the extracellular side; that stretch reads KSRKARSWPYGTGCCRS. Residues 239–259 traverse the membrane as a helical segment; that stretch reads FVADYGVPLMVVVWTALSFST. Residues 260–294 lie on the Cytoplasmic side of the membrane; that stretch reads PSKLPSGVPRRLVSPLPWDSVSLTHWTVIKDMGKV. Residues 295 to 315 traverse the membrane as a helical segment; the sequence is SPGYIFAAFIPALMIAGLYFF. At 316 to 335 the chain is on the extracellular side; sequence DHSVVSQLAQQKEFNLKNPS. The chain crosses the membrane as a helical span at residues 336-356; sequence AYHYDILLLGFMVLICGMLGL. The Cytoplasmic segment spans residues 357 to 477; that stretch reads PPSNGVLPQS…EQRVSNLLQS (121 aa). Residues 478–498 form a helical membrane-spanning segment; that stretch reads LLVIGAVFALPVIKLIPTSLL. The Extracellular portion of the chain corresponds to 499–565; sequence WGYFAYMAID…QILYFGLCYG (67 aa). The helical transmembrane segment at 566–586 threads the bilayer; the sequence is VTWIPVAGIMFPVLFFLLVAI. Residues 587 to 683 are Cytoplasmic-facing; it reads RQYLLPKLFK…GDGDMSSSRE (97 aa).

The protein belongs to the anion exchanger (TC 2.A.31.3) family.

The protein resides in the membrane. Putative boron transporter. Boron is essential for maintaining the integrity of plants cell walls. The sequence is that of Putative boron transporter 5 (BOR5) from Arabidopsis thaliana (Mouse-ear cress).